The sequence spans 316 residues: ATP synthase gamma chain (316 aa).

The protein belongs to the ATPase gamma chain family. As to quaternary structure, F-type ATPases have 2 components, CF(1) - the catalytic core - and CF(0) - the membrane proton channel. CF(1) has five subunits: alpha(3), beta(3), gamma(1), delta(1), epsilon(1). CF(0) has three main subunits: a, b and c.

The protein resides in the cellular thylakoid membrane. Functionally, produces ATP from ADP in the presence of a proton gradient across the membrane. The gamma chain is believed to be important in regulating ATPase activity and the flow of protons through the CF(0) complex. In Prochlorococcus marinus (strain NATL1A), this protein is ATP synthase gamma chain.